Reading from the N-terminus, the 526-residue chain is NAD(P)H-quinone oxidoreductase subunit 2 (526 aa).

14 helical membrane-spanning segments follow: residues 16–36, 43–63, 80–100, 110–130, 133–153, 168–188, 212–232, 246–266, 280–300, 308–328, 336–356, 380–400, 402–422, and 468–488; these read ILPEGIVVITLLVVLVGDLIL, WTPYAAIVGLLGAIVALYTQW, LSIAFRGIIAISAITTILMSV, LGEFICILLTATLGAMFLSGA, LVMIFISLETLSISSYLLTGY, LLIGAASSAIFLYGISLLYGL, LALVIALVFAIAGISFKISAV, PTPVVAFLSVGSKAAGFALAI, WHFVFTALAILSMVLGNVVAL, LLAYSSIGQAGFVMIGLLANT, IFYLLVYLFMNLGGFTCVILF, LGLSLCLLSLGGIPPLAGFFG, IYLFWAGWQAGLYWLVLLGLI, and VGLILSVLATSLAGILSNPLF.

This sequence belongs to the complex I subunit 2 family. In terms of assembly, NDH-1 can be composed of about 15 different subunits; different subcomplexes with different compositions have been identified which probably have different functions.

Its subcellular location is the cellular thylakoid membrane. It catalyses the reaction a plastoquinone + NADH + (n+1) H(+)(in) = a plastoquinol + NAD(+) + n H(+)(out). It carries out the reaction a plastoquinone + NADPH + (n+1) H(+)(in) = a plastoquinol + NADP(+) + n H(+)(out). Functionally, NDH-1 shuttles electrons from an unknown electron donor, via FMN and iron-sulfur (Fe-S) centers, to quinones in the respiratory and/or the photosynthetic chain. The immediate electron acceptor for the enzyme in this species is believed to be plastoquinone. Couples the redox reaction to proton translocation, and thus conserves the redox energy in a proton gradient. Cyanobacterial NDH-1 also plays a role in inorganic carbon-concentration. The polypeptide is NAD(P)H-quinone oxidoreductase subunit 2 (Trichodesmium erythraeum (strain IMS101)).